Consider the following 5142-residue polypeptide: Protein piccolo (5142 aa).

The span at 1-21 (MGNEASLEGEGLPEGLAAAAA) shows a compositional bias: low complexity. Disordered stretches follow at residues 1–154 (MGNE…SMMP) and 177–583 (DLIS…PSQG). 3 stretches are compositionally biased toward basic and acidic residues: residues 114-125 (RTTDTFRSEQKL), 136-150 (KESKSRTDLKEEHKS), and 188-202 (ETTKKQKVVQKEQGK). Over residues 232–244 (QDGTPKSISSQQP) the composition is skewed to polar residues. Composition is skewed to pro residues over residues 298–317 (LPSPSKPPIQQPTPGKPPAQ) and 352–371 (PVQPPGTTKPPAQPLGPAKP). Over residues 376-385 (TGSEKPSSEQ) the composition is skewed to polar residues. Residues 397–555 (VGKTPAQQPG…PAKPSAQQST (159 aa)) are 10 X 10 AA tandem approximate repeats of P-A-K-P-Q-P-Q-Q-P-X. The segment covering 467 to 493 (TKPPSQLPGPAKPPPQQPGPAKPPPQQ) has biased composition (pro residues). A compositionally biased stretch (low complexity) spans 494 to 506 (PGSAKPPSQQPGS). Residues 507–522 (TKPPPQQPGPAKPSPQ) are compositionally biased toward pro residues. The span at 523 to 554 (QPGSTKPPSQQPGSAKPSAQQPSPAKPSAQQS) shows a compositional bias: low complexity. A C4-type zinc finger spans residues 589-613 (CPLCNTTELLLHVPEKANFNTCTEC). Disordered regions lie at residues 650–929 (LAPV…TVTG) and 945–1058 (LIST…PEST). Low complexity predominate over residues 673-683 (SKSSPQPQQTS). Basic and acidic residues-rich tracts occupy residues 684 to 702 (PKKDAAPKQDLSKAPEPKK) and 743 to 755 (EQDKAPVADDKPK). The segment covering 765–774 (DLVSSSSATT) has biased composition (polar residues). Positions 841–857 (KGQKQVDPVQKKEEPKK) are enriched in basic and acidic residues. The span at 873 to 882 (KGSPTPPGPR) shows a compositional bias: pro residues. Residues 889 to 927 (VPTPQQSPKPQEQSRRFSLNLGSITDAPKSQPTTPQETV) show a composition bias toward polar residues. A phosphoserine mark is found at Ser-906 and Ser-918. Thr-922 is subject to Phosphothreonine. The span at 949–969 (AGQPGPHSQSGPGAPMKQAPA) shows a compositional bias: low complexity. Composition is skewed to basic and acidic residues over residues 996 to 1012 (VKKETKAPAAEKLEPKA) and 1019 to 1034 (KRTETEKKPPPIKDSK). A C4-type zinc finger spans residues 1059-1082 (CPLCKTELNIGSKDPPNFNTCTEC). Disordered regions lie at residues 1120-1163 (GDIR…QEQE), 1183-1386 (EKIP…TDEK), 1391-1410 (GLKKDSFSQESSPSSPSDLA), and 1423-1868 (QAST…SDPE). The span at 1126-1139 (PPAPSGPKASPMPV) shows a compositional bias: pro residues. 3 stretches are compositionally biased toward basic and acidic residues: residues 1193–1265 (QKQE…HDLL), 1307–1318 (PKEDDKTTKTIK), and 1330–1347 (DQVEPGKEKTEKEDDKSD). Residues 1348-1358 (TSSSQQPKSPQ) are compositionally biased toward low complexity. Phosphoserine is present on residues Ser-1356, Ser-1366, Ser-1367, Ser-1396, Ser-1398, Ser-1401, Ser-1402, and Ser-1405. Positions 1359 to 1374 (GLSDTGYSSDGISSSL) are enriched in polar residues. Residues 1398–1407 (SQESSPSSPS) are compositionally biased toward low complexity. Composition is skewed to basic and acidic residues over residues 1428–1451 (ADEKSEKKTQPHEVSPEQPKDQEK) and 1469–1510 (KESQ…REPY). Residues Ser-1516, Ser-1517, Ser-1519, Ser-1522, Ser-1546, Ser-1549, Ser-1570, and Ser-1572 each carry the phosphoserine modification. Positions 1564 to 1576 (SADEDASGSEDDE) are enriched in acidic residues. Thr-1617 bears the Phosphothreonine mark. Residues Ser-1618, Ser-1628, and Ser-1640 each carry the phosphoserine modification. The segment covering 1631–1640 (DEDDEAFDES) has biased composition (acidic residues). The segment covering 1641-1652 (PELKYRETKSQE) has biased composition (basic and acidic residues). A compositionally biased stretch (polar residues) spans 1671–1689 (ELNSTIADKYSAESSQKKT). Acidic residues predominate over residues 1693-1703 (FDEEPELEMES). The residue at position 1703 (Ser-1703) is a Phosphoserine. Phosphothreonine is present on Thr-1705. 2 positions are modified to phosphoserine: Ser-1707 and Ser-1712. A compositionally biased stretch (polar residues) spans 1715-1732 (EGSSSLHASSFTPGTSPT). The segment covering 1772–1785 (DSSEEEELREEEEL) has biased composition (acidic residues). 2 positions are modified to phosphoserine: Ser-1773 and Ser-1774. Residues 1786–1799 (LKEQEKQREIEQQQ) show a composition bias toward basic and acidic residues. Position 1825 is a phosphothreonine (Thr-1825). At Ser-1831 the chain carries Phosphoserine. The span at 1840 to 1855 (EELRQAAEMEELHRSS) shows a compositional bias: basic and acidic residues. Ser-1860, Ser-1865, Ser-1873, and Ser-1894 each carry phosphoserine. 3 disordered regions span residues 2169-2192 (PSESATSVPPSDTPSLTSSVSSVC), 2365-2438 (ETFG…PTIL), and 2504-2536 (EPSKPPIAPKPVIPQLPTTTQKPTDIHPKPTGL). 2 stretches are compositionally biased toward low complexity: residues 2174–2192 (TSVPPSDTPSLTSSVSSVC) and 2374–2387 (SQLPSGSPSVSSLP). Composition is skewed to pro residues over residues 2404-2433 (QPPPPPPPPPPPPPPPPPPPPPPLPPPTSP) and 2506-2517 (SKPPIAPKPVIP). At Ser-2562 the chain carries Phosphoserine. Thr-3069 is modified (phosphothreonine). Disordered stretches follow at residues 3407–3508 (EKQP…DKTK) and 3558–3626 (KTYK…LYSP). Basic and acidic residues predominate over residues 3432–3441 (DDPRSFKKIV). A Phosphoserine modification is found at Ser-3443. A phosphothreonine mark is found at Thr-3447 and Thr-3474. Residues 3474–3483 (TDDEDQDEWD) show a composition bias toward acidic residues. The span at 3574–3585 (DTQSPQYLSATS) shows a compositional bias: polar residues. Phosphoserine occurs at positions 3577, 3585, 3615, 3619, 3625, 3628, 3631, 3652, 3678, 3680, and 3686. Disordered regions lie at residues 3652–3746 (SPQK…MGTV) and 3833–3908 (YMSD…QQSH). 2 stretches are compositionally biased toward polar residues: residues 3701 to 3716 (EGYTTKGSQTMTSSGA) and 3733 to 3745 (STGTQSTFSTMGT). At Ser-3835 the chain carries Phosphoserine. The span at 3845–3857 (TRIESQHGIERPR) shows a compositional bias: basic and acidic residues. Polar residues predominate over residues 3859–3908 (APQTEFSQFIPPQTQTESQLVPPTSPYTQYQYSSPALPTQAPTSYTQQSH). 2 positions are modified to phosphoserine: Ser-4088 and Ser-4204. Residues 4278–4301 (EADKPYSSGSRSRPSSRPSSVYGL) form a disordered region. Positions 4282-4301 (PYSSGSRSRPSSRPSSVYGL) are enriched in low complexity. Ser-4358, Ser-4362, Ser-4365, Ser-4394, and Ser-4430 each carry phosphoserine. Residues 4389-4411 (RDQFGSSHSLPEVQQHMREESRT) form a disordered region. Residues 4496-4590 (RIKITRDSKD…EAEICVRLDL (95 aa)) enclose the PDZ domain. Disordered stretches follow at residues 4597-4618 (ENSQHLELHEPPKAVDKAKSPG) and 4645-4690 (EKGS…TKVV). Residues 4598–4615 (NSQHLELHEPPKAVDKAK) show a composition bias toward basic and acidic residues. The segment covering 4652–4673 (SGPTSAGSSSVPSPGQPGSPSV) has biased composition (low complexity). The residue at position 4664 (Ser-4664) is a Phosphoserine. Residues 4694–4823 (ITGEIQLQIN…SHLDNTPRWY (130 aa)) enclose the C2 1 domain. Ca(2+)-binding residues include Asp-4723 and Asp-4729. Ser-4778 bears the Phosphoserine mark. Asp-4793, Asp-4795, Ser-4798, and Asp-4801 together coordinate Ca(2+). 2 disordered regions span residues 4830–4907 (ESID…VTQT) and 4930–4986 (PTKP…QNGQ). Composition is skewed to low complexity over residues 4838-4853 (HSSQSSQQSPKPSVIK) and 4877-4887 (SSPGSSKSSSE). Over residues 4895-4907 (PSRSQSKTSVTQT) the composition is skewed to polar residues. A compositionally biased stretch (low complexity) spans 4941–4965 (SSVSTGSSGSSFGSGYSVDSEGSSS). The C2 2 domain maps to 5007 to 5132 (VMGEIKIALK…DLRKRIVNWH (126 aa)).

In terms of assembly, interacts with BSN, ERC2/CAST1, RIMS1 and UNC13A. Interacts (via C-terminus) with TRIO (via N-terminus). Interacts with CTBP1. Interacts with SIAH1; this interaction negatively regulates SIAH1 E3 ligase activity. Directly interacts with GIT1 and GIT2. Ca(2+) serves as cofactor. Moderately expressed in the developing cerebral cortex.

The protein localises to the presynaptic active zone. Functionally, scaffold protein of the presynaptic cytomatrix at the active zone (CAZ) which is the place in the synapse where neurotransmitter is released. After synthesis, participates in the formation of Golgi-derived membranous organelles termed Piccolo-Bassoon transport vesicles (PTVs) that are transported along axons to sites of nascent synaptic contacts. At the presynaptic active zone, regulates the spatial organization of synaptic vesicle cluster, the protein complexes that execute membrane fusion and compensatory endocytosis. Organizes as well the readily releasable pool of synaptic vesicles and safeguards a fraction of them to be not immediately available for action potential-induced release. Also functions in processes other than assembly such as the regulation of specific presynaptic protein ubiquitination by interacting with SIAH1 or the regulation of presynaptic autophagy. Also mediates synapse to nucleus communication leading to reconfiguration of gene expression by associating with the transcriptional corepressor CTBP1 and by subsequently reducing the size of its pool available for nuclear import. In Homo sapiens (Human), this protein is Protein piccolo.